A 348-amino-acid chain; its full sequence is 3-methyl-2-oxobutanoate dehydrogenase subunit beta (348 aa).

Thiamine diphosphate contacts are provided by residues glutamate 51, leucine 80–glutamate 82, glutamine 104, and phenylalanine 108–proline 111. Substrate is bound by residues phenylalanine 105–phenylalanine 108 and histidine 151. Catalysis depends on histidine 151, which acts as the Proton acceptor.

As to quaternary structure, heteromer of E1 alpha (BkdA) and beta (BkdB) subunits. Part of the BCKADH complex, consisting of multiple copies of BkdA/BkdB (E1), BkdC (E2) and Lpd (E3). The cofactor is thiamine diphosphate.

It carries out the reaction N(6)-[(R)-lipoyl]-L-lysyl-[protein] + 3-methyl-2-oxobutanoate + H(+) = N(6)-[(R)-S(8)-2-methylpropanoyldihydrolipoyl]-L-lysyl-[protein] + CO2. Functionally, component of the branched-chain alpha-ketoacid dehydrogenase (BCKADH) complex, that catalyzes the overall conversion of branched-chain alpha-ketoacids to acyl-CoA and CO(2). In Mycobacterium tuberculosis (strain CDC 1551 / Oshkosh), this protein is 3-methyl-2-oxobutanoate dehydrogenase subunit beta (bkdB).